The following is a 152-amino-acid chain: Transcriptional regulator MraZ (152 aa).

2 consecutive SpoVT-AbrB domains span residues 5 to 52 and 81 to 124; these read ASAI…PLDE and AHEC…DETA.

This sequence belongs to the MraZ family. Forms oligomers.

It localises to the cytoplasm. The protein resides in the nucleoid. This chain is Transcriptional regulator MraZ, found in Shewanella woodyi (strain ATCC 51908 / MS32).